Consider the following 265-residue polypeptide: Anamorsin homolog (265 aa).

The tract at residues 1–147 (MDAAKMYGAV…WKIGSSFALK (147 aa)) is N-terminal SAM-like domain. Residues 147–176 (KKVVKSSPKVQIDFDSDLIDENSLLSEEDL) are linker. The [2Fe-2S] cluster site is built by Cys186, Cys195, Cys198, and Cys200. Residues 186–200 (CEIGPTRKACKNCSC) form a fe-S binding site A region. The [4Fe-4S] cluster site is built by Cys226, Cys229, Cys237, and Cys240. 2 consecutive short sequence motifs (cx2C motif) follow at residues 226–229 (CGSC) and 237–240 (CSTC). Residues 226–240 (CGSCGLGDAFRCSTC) are fe-S binding site B.

The protein belongs to the anamorsin family. As to quaternary structure, monomer. [2Fe-2S] cluster serves as cofactor. It depends on [4Fe-4S] cluster as a cofactor.

The protein resides in the cytoplasm. Its subcellular location is the mitochondrion intermembrane space. Its function is as follows. Component of the cytosolic iron-sulfur (Fe-S) protein assembly (CIA) machinery. Required for the maturation of extramitochondrial Fe-S proteins. Part of an electron transfer chain functioning in an early step of cytosolic Fe-S biogenesis, facilitating the de novo assembly of a [4Fe-4S] cluster on the cytosolic Fe-S scaffold complex. Electrons are transferred from NADPH via a FAD- and FMN-containing diflavin oxidoreductase. Together with the diflavin oxidoreductase, also required for the assembly of the diferric tyrosyl radical cofactor of ribonucleotide reductase (RNR), probably by providing electrons for reduction during radical cofactor maturation in the catalytic small subunit. This chain is Anamorsin homolog, found in Medicago truncatula (Barrel medic).